Reading from the N-terminus, the 378-residue chain is D-galactarolactone cycloisomerase (378 aa).

D194, E220, and E246 together coordinate Mg(2+). Catalysis depends on H296, which acts as the Proton acceptor.

It belongs to the mandelate racemase/muconate lactonizing enzyme family. Homooctamer. Requires Mg(2+) as cofactor.

The enzyme catalyses D-glucaro-1,4-lactone = 5-dehydro-4-deoxy-D-glucarate + H(+). It carries out the reaction D-galactaro-1,4-lactone = 5-dehydro-4-deoxy-D-glucarate + H(+). Its pathway is carbohydrate acid metabolism; D-galacturonate degradation via prokaryotic oxidative pathway. Functionally, catalyzes the ring opening of D-galactaro-1,4-lactone to yield 5-keto-4-deoxy-D-glucarate (KDG) via a beta-elimination reaction. This is a step in the oxidative degradation pathway of D-galacturonate, which allows A.tumefaciens to utilize D-galacturonate as a sole carbon source. To a lesser extent, can also use D-glucaro-1,4-lactone as substrate to produce KDG, but cannot use D-galactaro-1,5-lactone, D-glucaro-6,3-lactone and linear D-glucarate. In Agrobacterium fabrum (strain C58 / ATCC 33970) (Agrobacterium tumefaciens (strain C58)), this protein is D-galactarolactone cycloisomerase (gci).